The chain runs to 270 residues: 4-hydroxy-tetrahydrodipicolinate reductase (270 aa).

Residues 8–13 (GALGRM), D34, 102–104 (GTT), and 128–131 (SQNY) contribute to the NAD(+) site. H160 serves as the catalytic Proton donor/acceptor. H161 serves as a coordination point for (S)-2,3,4,5-tetrahydrodipicolinate. The active-site Proton donor is the K164. 170 to 171 (GT) contacts (S)-2,3,4,5-tetrahydrodipicolinate.

It belongs to the DapB family.

The protein localises to the cytoplasm. It catalyses the reaction (S)-2,3,4,5-tetrahydrodipicolinate + NAD(+) + H2O = (2S,4S)-4-hydroxy-2,3,4,5-tetrahydrodipicolinate + NADH + H(+). It carries out the reaction (S)-2,3,4,5-tetrahydrodipicolinate + NADP(+) + H2O = (2S,4S)-4-hydroxy-2,3,4,5-tetrahydrodipicolinate + NADPH + H(+). Its pathway is amino-acid biosynthesis; L-lysine biosynthesis via DAP pathway; (S)-tetrahydrodipicolinate from L-aspartate: step 4/4. In terms of biological role, catalyzes the conversion of 4-hydroxy-tetrahydrodipicolinate (HTPA) to tetrahydrodipicolinate. The polypeptide is 4-hydroxy-tetrahydrodipicolinate reductase (Methanococcus maripaludis (strain DSM 14266 / JCM 13030 / NBRC 101832 / S2 / LL)).